The following is a 191-amino-acid chain: Glycerol-3-phosphate acyltransferase (191 aa).

The next 5 membrane-spanning stretches (helical) occupy residues 5–25 (IVFVLSYILGSIPFSLVITKI), 50–70 (CIAALALLLDSLKGFIAVYIA), 78–98 (SFHMYASAILVVLGHMFPVWL), 112–132 (ILIALNISLVLAFVFVWLAVF), and 153–173 (SFFFQRDLFFTLLTVAILIFF).

This sequence belongs to the PlsY family. In terms of assembly, probably interacts with PlsX.

Its subcellular location is the cell membrane. The catalysed reaction is an acyl phosphate + sn-glycerol 3-phosphate = a 1-acyl-sn-glycero-3-phosphate + phosphate. The protein operates within lipid metabolism; phospholipid metabolism. Its function is as follows. Catalyzes the transfer of an acyl group from acyl-phosphate (acyl-PO(4)) to glycerol-3-phosphate (G3P) to form lysophosphatidic acid (LPA). This enzyme utilizes acyl-phosphate as fatty acyl donor, but not acyl-CoA or acyl-ACP. This chain is Glycerol-3-phosphate acyltransferase, found in Wolbachia sp. subsp. Brugia malayi (strain TRS).